The chain runs to 307 residues: Ornithine carbamoyltransferase (307 aa).

Carbamoyl phosphate is bound by residues 54 to 57, glutamine 81, arginine 105, and 132 to 135; these read STRT and HPCQ. L-ornithine contacts are provided by residues asparagine 163, aspartate 221, and 225–226; that span reads SM. Carbamoyl phosphate contacts are provided by residues 261 to 262 and arginine 289; that span reads CL.

The protein belongs to the aspartate/ornithine carbamoyltransferase superfamily. OTCase family.

Its subcellular location is the cytoplasm. It catalyses the reaction carbamoyl phosphate + L-ornithine = L-citrulline + phosphate + H(+). It participates in amino-acid biosynthesis; L-arginine biosynthesis; L-arginine from L-ornithine and carbamoyl phosphate: step 1/3. Functionally, reversibly catalyzes the transfer of the carbamoyl group from carbamoyl phosphate (CP) to the N(epsilon) atom of ornithine (ORN) to produce L-citrulline. The protein is Ornithine carbamoyltransferase of Aromatoleum aromaticum (strain DSM 19018 / LMG 30748 / EbN1) (Azoarcus sp. (strain EbN1)).